Consider the following 156-residue polypeptide: 6,7-dimethyl-8-ribityllumazine synthase (156 aa).

Residues F22, 57–59, and 81–83 each bind 5-amino-6-(D-ribitylamino)uracil; these read AYE and TVI. A (2S)-2-hydroxy-3-oxobutyl phosphate-binding site is contributed by 86-87; that stretch reads GT. H89 functions as the Proton donor in the catalytic mechanism. Residue F114 coordinates 5-amino-6-(D-ribitylamino)uracil. R128 contributes to the (2S)-2-hydroxy-3-oxobutyl phosphate binding site.

The protein belongs to the DMRL synthase family. As to quaternary structure, forms an icosahedral capsid composed of 60 subunits, arranged as a dodecamer of pentamers.

The enzyme catalyses (2S)-2-hydroxy-3-oxobutyl phosphate + 5-amino-6-(D-ribitylamino)uracil = 6,7-dimethyl-8-(1-D-ribityl)lumazine + phosphate + 2 H2O + H(+). Its pathway is cofactor biosynthesis; riboflavin biosynthesis; riboflavin from 2-hydroxy-3-oxobutyl phosphate and 5-amino-6-(D-ribitylamino)uracil: step 1/2. Its function is as follows. Catalyzes the formation of 6,7-dimethyl-8-ribityllumazine by condensation of 5-amino-6-(D-ribitylamino)uracil with 3,4-dihydroxy-2-butanone 4-phosphate. This is the penultimate step in the biosynthesis of riboflavin. The chain is 6,7-dimethyl-8-ribityllumazine synthase from Serratia proteamaculans (strain 568).